Reading from the N-terminus, the 387-residue chain is Cystathionine beta-lyase (387 aa).

The residue at position 204 (lysine 204) is an N6-(pyridoxal phosphate)lysine.

This sequence belongs to the trans-sulfuration enzymes family. Homotetramer. The cofactor is pyridoxal 5'-phosphate.

It is found in the cytoplasm. The catalysed reaction is L,L-cystathionine + H2O = L-homocysteine + pyruvate + NH4(+). It carries out the reaction an S-substituted L-cysteine + H2O = a thiol + pyruvate + NH4(+). The protein operates within amino-acid biosynthesis; L-methionine biosynthesis via de novo pathway; L-homocysteine from L-cystathionine: step 1/1. Its function is as follows. Catalyzes the cleavage of cystathionine to homocysteine, pyruvate and ammonia during methionine biosynthesis. The sequence is that of Cystathionine beta-lyase (metC) from Coxiella burnetii (strain RSA 493 / Nine Mile phase I).